Reading from the N-terminus, the 65-residue chain is Large ribosomal subunit protein bL33c (65 aa).

This sequence belongs to the bacterial ribosomal protein bL33 family.

It is found in the plastid. The protein resides in the chloroplast. The polypeptide is Large ribosomal subunit protein bL33c (rpl33) (Marchantia polymorpha (Common liverwort)).